A 2206-amino-acid chain; its full sequence is Genome polyprotein (2206 aa).

Residue glycine 2 is the site of N-myristoyl glycine; by host attachment. At 2–1517 the chain is on the cytoplasmic side; it reads GAQVSSQKVG…NINRAMTILQ (1516 aa). 2 amphipathic alpha-helix regions span residues 579-599 and 579-603; these read GVDDLITEVAQNALALSLPKP and GVDDLITEVAQNALALSLPKPQSNL. Active-site for protease 2A activity residues include histidine 898 and aspartate 916. Cysteine 933 and cysteine 935 together coordinate Zn(2+). The active-site For protease 2A activity is the cysteine 987. Cysteine 993 and histidine 995 together coordinate Zn(2+). Positions 1125–1197 are membrane-binding; that stretch reads GDSWLKKFTE…HQSCPSQEHQ (73 aa). Residues 1125–1263 form an oligomerization region; it reads GDSWLKKFTE…SPGTGKSVAT (139 aa). The segment at 1146 to 1150 is RNA-binding; that stretch reads SNKIS. Residues 1229-1385 form the SF3 helicase domain; sequence EHTINNYIQF…SEYSRDGKLN (157 aa). 1253–1260 contributes to the ATP binding site; sequence GSPGTGKS. 4 residues coordinate Zn(2+): cysteine 1393, cysteine 1396, cysteine 1405, and cysteine 1410. Residues 1393–1410 form a C4-type zinc finger; that stretch reads CKNCHQPANFKRCCPLVC. The interval 1437–1444 is RNA-binding; it reads EKNRRSNI. The segment at 1448 to 1453 is oligomerization; the sequence is MEALFQ. An intramembrane segment occupies 1518-1533; sequence AVTTFAAVAGVVYVMY. Residues 1534–2206 are Cytoplasmic-facing; sequence KLFAGHQGAY…TLYRRWLDSF (673 aa). At tyrosine 1543 the chain carries O-(5'-phospho-RNA)-tyrosine. Residues 1563–1741 enclose the Peptidase C3 domain; that stretch reads GPGFDYAVAM…FAAALKRSYF (179 aa). Active-site for protease 3C activity residues include histidine 1602, glutamate 1633, and cysteine 1709. The 116-residue stretch at 1972-2087 folds into the RdRp catalytic domain; it reads EKLFAFDYTG…SYPHEVDASL (116 aa). Residues aspartate 1978 and aspartate 2073 each contribute to the Mg(2+) site.

Belongs to the picornaviruses polyprotein family. In terms of assembly, interacts with capsid protein VP1 and capsid protein VP3 to form heterotrimeric protomers. Interacts with capsid protein VP0, and capsid protein VP3 to form heterotrimeric protomers. Interacts with human PVR. Five protomers subsequently associate to form pentamers which serve as building blocks for the capsid. Interacts with capsid protein VP2, capsid protein VP3 and capsid protein VP4 following cleavage of capsid protein VP0. As to quaternary structure, interacts with capsid protein VP1 and capsid protein VP3 in the mature capsid. In terms of assembly, interacts with capsid protein VP0 and capsid protein VP1 to form heterotrimeric protomers. Five protomers subsequently associate to form pentamers which serve as building blocks for the capsid. Interacts with capsid protein VP4 in the mature capsid. Interacts with protein 2C; this interaction may be important for virion morphogenesis. Interacts with capsid protein VP1 and capsid protein VP3. As to quaternary structure, homodimer. In terms of assembly, homohexamer; forms a hexameric ring structure with 6-fold symmetry characteristic of AAA+ ATPases. Interacts (via N-terminus) with host RTN3 (via reticulon domain); this interaction is important for viral replication. Interacts with capsid protein VP3; this interaction may be important for virion morphogenesis. Interacts with protein 3CD. As to quaternary structure, homodimer. Interacts with host GBF1. Interacts (via GOLD domain) with host ACBD3 (via GOLD domain); this interaction allows the formation of a viral protein 3A/ACBD3 heterotetramer with a 2:2 stoichiometry, which will stimulate the recruitment of host PI4KB in order to synthesize PI4P at the viral RNA replication sites. In terms of assembly, interacts with RNA-directed RNA polymerase. Interacts with protein 3AB and with RNA-directed RNA polymerase. As to quaternary structure, interacts with Viral protein genome-linked and with protein 3CD. Mg(2+) is required as a cofactor. In terms of processing, specific enzymatic cleavages in vivo by the viral proteases yield processing intermediates and the mature proteins. Myristoylation is required for the formation of pentamers during virus assembly. Further assembly of 12 pentamers and a molecule of genomic RNA generates the provirion. Post-translationally, during virion maturation, immature virions are rendered infectious following cleavage of VP0 into VP4 and VP2. This maturation seems to be an autocatalytic event triggered by the presence of RNA in the capsid and it is followed by a conformational change infectious virion. In terms of processing, myristoylation is required during RNA encapsidation and formation of the mature virus particle. VPg is uridylylated by the polymerase into VPg-pUpU. This acts as a nucleotide-peptide primer for the genomic RNA replication.

The protein resides in the virion. Its subcellular location is the host cytoplasm. It localises to the host cytoplasmic vesicle membrane. It is found in the host nucleus. It catalyses the reaction a ribonucleoside 5'-triphosphate + H2O = a ribonucleoside 5'-diphosphate + phosphate + H(+). The catalysed reaction is Selective cleavage of Tyr-|-Gly bond in the picornavirus polyprotein.. The enzyme catalyses RNA(n) + a ribonucleoside 5'-triphosphate = RNA(n+1) + diphosphate. It carries out the reaction Selective cleavage of Gln-|-Gly bond in the poliovirus polyprotein. In other picornavirus reactions Glu may be substituted for Gln, and Ser or Thr for Gly.. Its activity is regulated as follows. Replication or transcription is subject to high level of random mutations by the nucleotide analog ribavirin. Functionally, forms an icosahedral capsid of pseudo T=3 symmetry with capsid proteins VP2 and VP3. The capsid is 300 Angstroms in diameter, composed of 60 copies of each capsid protein and enclosing the viral positive strand RNA genome. Capsid protein VP1 mainly forms the vertices of the capsid. Capsid protein VP1 interacts with host cell receptor PVR to provide virion attachment to target host cells. This attachment induces virion internalization predominantly through clathrin- and caveolin-independent endocytosis in Hela cells and through caveolin-mediated endocytosis in brain microvascular endothelial cells. Tyrosine kinases are probably involved in the entry process. Virus binding to PVR induces increased junctional permeability and rearrangement of junctional proteins. Modulation of endothelial tight junctions, as well as cytolytic infection of endothelial cells themselves, may result in loss of endothelial integrity which may help the virus to reach the CNS. After binding to its receptor, the capsid undergoes conformational changes. Capsid protein VP1 N-terminus (that contains an amphipathic alpha-helix) and capsid protein VP4 are externalized. Together, they shape a pore in the host membrane through which viral genome is translocated to host cell cytoplasm. Forms an icosahedral capsid of pseudo T=3 symmetry with capsid proteins VP2 and VP3. The capsid is 300 Angstroms in diameter, composed of 60 copies of each capsid protein and enclosing the viral positive strand RNA genome. Its function is as follows. Lies on the inner surface of the capsid shell. After binding to the host receptor, the capsid undergoes conformational changes. Capsid protein VP4 is released, Capsid protein VP1 N-terminus is externalized, and together, they shape a pore in the host membrane through which the viral genome is translocated into the host cell cytoplasm. In terms of biological role, component of immature procapsids, which is cleaved into capsid proteins VP4 and VP2 after maturation. Allows the capsid to remain inactive before the maturation step. Functionally, cysteine protease that cleaves viral polyprotein and specific host proteins. It is responsible for the autocatalytic cleavage between the P1 and P2 regions, which is the first cleavage occurring in the polyprotein. Also cleaves the host translation initiation factor EIF4G1, in order to shut down the capped cellular mRNA translation. Inhibits the host nucleus-cytoplasm protein and RNA trafficking by cleaving host members of the nuclear pores including NUP98, NUP62 and NUP153. Counteracts stress granule formation probably by antagonizing its assembly or promoting its dissassembly. Cleaves and inhibits host IFIH1/MDA5, thereby inhibiting the type-I IFN production and the establishment of the antiviral state. Cleaves and inhibits host MAVS, thereby inhibiting the type-I IFN production and the establishment of the antiviral state. Plays an essential role in the virus replication cycle by acting as a viroporin. Creates a pore in the host endoplasmic reticulum and as a consequence releases Ca2+ in the cytoplasm of infected cell. In turn, high levels of cytoplasmic calcium may trigger membrane trafficking and transport of viral ER-associated proteins to viroplasms, sites of viral genome replication. Its function is as follows. Induces and associates with structural rearrangements of intracellular membranes. Displays RNA-binding, nucleotide binding and NTPase activities. May play a role in virion morphogenesis and viral RNA encapsidation by interacting with the capsid protein VP3. In terms of biological role, localizes the viral replication complex to the surface of membranous vesicles. Together with protein 3CD binds the Cis-Active RNA Element (CRE) which is involved in RNA synthesis initiation. Acts as a cofactor to stimulate the activity of 3D polymerase, maybe through a nucleid acid chaperone activity. Functionally, localizes the viral replication complex to the surface of membranous vesicles. It inhibits host cell endoplasmic reticulum-to-Golgi apparatus transport and causes the disassembly of the Golgi complex, possibly through GBF1 interaction. This would result in depletion of MHC, trail receptors and IFN receptors at the host cell surface. Plays an essential role in viral RNA replication by recruiting ACBD3 and PI4KB at the viral replication sites, thereby allowing the formation of the rearranged membranous structures where viral replication takes place. Acts as a primer for viral RNA replication and remains covalently bound to viral genomic RNA. VPg is uridylylated prior to priming replication into VPg-pUpU. The oriI viral genomic sequence may act as a template for this. The VPg-pUpU is then used as primer on the genomic RNA poly(A) by the RNA-dependent RNA polymerase to replicate the viral genome. During genome replication, the VPg-RNA linkage is removed by the host TDP2, thereby accelerating replication. During the late stage of the replication cycle, host TDP2 is excluded from sites of viral RNA synthesis and encapsidation, allowing for the generation of progeny virions. Its function is as follows. Involved in the viral replication complex and viral polypeptide maturation. It exhibits protease activity with a specificity and catalytic efficiency that is different from protease 3C. Protein 3CD lacks polymerase activity. Protein 3CD binds to the 5'UTR of the viral genome. In terms of biological role, major viral protease that mediates proteolytic processing of the polyprotein. Cleaves host EIF5B, contributing to host translation shutoff. Also cleaves host PABPC1, contributing to host translation shutoff. Cleaves host RIGI and thus contributes to the inhibition of type I interferon production. Cleaves host NLRP1, triggers host N-glycine-mediated degradation of the autoinhibitory NLRP1 N-terminal fragment. Inhibits the integrated stress response (ISR) in the infected cell by cleaving host G3BP1. Stress granule formation is thus inhibited, which allows protein synthesis and viral replication. Functionally, replicates the viral genomic RNA on the surface of intracellular membranes. May form linear arrays of subunits that propagate along a strong head-to-tail interaction called interface-I. Covalently attaches UMP to a tyrosine of VPg, which is used to prime RNA synthesis. The positive stranded RNA genome is first replicated at virus induced membranous vesicles, creating a dsRNA genomic replication form. This dsRNA is then used as template to synthesize positive stranded RNA genomes. ss(+)RNA genomes are either translated, replicated or encapsidated. The chain is Genome polyprotein from Poliovirus type 3 (strain 23127).